The sequence spans 114 residues: Iron-sulfur cluster insertion protein ErpA (114 aa).

Iron-sulfur cluster-binding residues include Cys42, Cys106, and Cys108.

It belongs to the HesB/IscA family. As to quaternary structure, homodimer. Iron-sulfur cluster is required as a cofactor.

Functionally, required for insertion of 4Fe-4S clusters for at least IspG. The sequence is that of Iron-sulfur cluster insertion protein ErpA from Haemophilus influenzae (strain PittGG).